Here is a 1048-residue protein sequence, read N- to C-terminus: Ankyrin repeat domain-containing protein 27 (1048 aa).

Positions 1–372 are sufficient for GEF activity towards RAB21; the sequence is MALYDEDLLK…RQGSLSTKTP (372 aa). Positions 233-371 constitute a VPS9 domain; the sequence is ASEDAAFNKI…IRQGSLSTKT (139 aa). ANK repeat units follow at residues 396–426, 462–491, 495–524, 528–557, 564–593, and 597–627; these read TPIDCLFKHIASGNQKEVERLLSQDDQDKDA, RGQTPLHVAALCGQASLIDFLVSKGAVVNA, HGSTPLHLACQKGFQSVTLLLLHYKASTEV, NGNTPLHLACTYGQEDCVKALVYYDVQACR, KGDTALHIAARWGYEGIIETLLQNGAPTAV, and LKETPLKCALNSKILSIMEAHHLSSDRRPRP. The interval 396-460 is sufficient for interaction with VPS29; that stretch reads TPIDCLFKHI…PSVVTPFSRD (65 aa). Residues 451–600 are interaction with RAB38; it reads PSVVTPFSRD…TAVQNRLKET (150 aa). Residues 451 to 729 form an interaction with RAB32 region; that stretch reads PSVVTPFSRD…CAPAQKLARI (279 aa). Over residues 618–627 the composition is skewed to basic and acidic residues; it reads HLSSDRRPRP. The tract at residues 618 to 650 is disordered; sequence HLSSDRRPRPSEVPAQSPTRSVDSISQGSSTSS. A compositionally biased stretch (low complexity) spans 638 to 650; the sequence is SVDSISQGSSTSS. Residues 658–707 form a required for interaction with VAMP7 region; it reads FRQEEVKKDYREVEKLLRAVADGDLEMVRYLLEWTEDDLDDVEDAISTVD. ANK repeat units follow at residues 668 to 698, 742 to 771, 775 to 804, 808 to 837, and 841 to 870; these read REVEKLLRAVADGDLEMVRYLLEWTEDDLDD, DGFSPLHMAALHGRTDLVPLLLKHGAYSGA, SQAVPLHLACQQGHFQVAKCLLDSNAKPNK, SGNTPLICACSAGHHEVAALLLQHGASINA, and KGNTALHEAVMGRHTLVVELLLFYGASVDI. A sufficient for interaction with VPS29 region spans residues 692–745; it reads TEDDLDDVEDAISTVDLEFCHPLCQCPKCAPAQKLARISANGLSVNVTNQDGFS. Over residues 949-962 the composition is skewed to basic and acidic residues; that stretch reads ERTSRETMGRDRSV. The disordered stretch occupies residues 949–1019; it reads ERTSRETMGR…AAPGHRPMVR (71 aa). Phosphoserine occurs at positions 961 and 969. Over residues 979 to 995 the composition is skewed to polar residues; sequence TGKQSDLSDLSRYQTSE. Basic and acidic residues predominate over residues 996 to 1006; it reads EGNKGLPERPV. T1022 is subject to Phosphothreonine.

As to quaternary structure, interacts with RAB21 (GDP-bound form), VPS29, KIF5A, KIF5C, GOLGA4. Interacts with RAB32 (GTP-bound form), RAB38 (GTP-bound form), VAMP7. Interacts with low affinity with RAB5. ANKRD27:RAB32 heterodimers can homodimerize to form tetramers. Can interact with RAB38 or RAB32, VPS29 and VAMP7 simultaneously. A decreased interaction with RAB32 seen in the presence of SGSM2.

It localises to the early endosome. The protein localises to the late endosome. The protein resides in the cytoplasmic vesicle membrane. Its subcellular location is the lysosome. It is found in the cell membrane. It localises to the melanosome. The protein localises to the cytoplasmic vesicle. May be a guanine exchange factor (GEF) for Rab21, Rab32 and Rab38 and regulate endosome dynamics. May regulate the participation of VAMP7 in membrane fusion events; in vitro inhibits VAMP7-mediated SNARE complex formation by trapping VAMP7 in a closed, fusogenically inactive conformation. Involved in peripheral melanosomal distribution of TYRP1 in melanocytes; the function, which probably is implicating vesicle-trafficking, includes cooperation with Rab32, Rab38 and VAMP7. Involved in the regulation of neurite growth; the function seems to require its GEF activity, probably towards Rab21, and VAMP7 but not Rab32/38. Proposed to be involved in Golgi sorting of VAMP7 and transport of VAMP7 vesicles to the cell surface; the function seems to implicate kinesin heavy chain isoform 5 proteins, GOLGA4, RAB21 and MACF1. Required for the colocalization of VAMP7 and Rab21, probably on TGN sites. Involved in GLUT1 endosome-to-plasma membrane trafficking; the function is dependent of association with VPS29. Regulates the proper trafficking of melanogenic enzymes TYR, TYRP1 and DCT/TYRP2 to melanosomes in melanocytes. This Mus musculus (Mouse) protein is Ankyrin repeat domain-containing protein 27 (Ankrd27).